A 292-amino-acid chain; its full sequence is Oxidative stress-responsive serine-rich protein 1 (292 aa).

A disordered region spans residues 24–178 (ASGSVASLSV…ATQVPQASLK (155 aa)). Residues 65–83 (STRKSSRGAVRTQRRRRSK) are compositionally biased toward basic residues. Residues T143 and T233 each carry the phosphothreonine modification.

This Homo sapiens (Human) protein is Oxidative stress-responsive serine-rich protein 1 (OSER1).